We begin with the raw amino-acid sequence, 1106 residues long: Probable ATP-citrate synthase (1106 aa).

Residues N358, T360, and R391 each coordinate citrate. The segment covering 442–459 has biased composition (polar residues); that stretch reads APQTTGQFLLSPERNTGG. The interval 442–478 is disordered; that stretch reads APQTTGQFLLSPERNTGGTERAPPSPAANATPTEHPL. ATP-binding positions include 701-721 and 752-778; these read VIRY…EVGG and ITSE…KNAA. E718 provides a ligand contact to Mg(2+). Catalysis depends on H760, which acts as the Tele-phosphohistidine intermediate. 779-789 serves as a coordination point for CoA; it reads LRASGALVPES.

In the N-terminal section; belongs to the succinate/malate CoA ligase beta subunit family. This sequence in the C-terminal section; belongs to the succinate/malate CoA ligase alpha subunit family. Homotetramer.

It localises to the cytoplasm. The enzyme catalyses oxaloacetate + acetyl-CoA + ADP + phosphate = citrate + ATP + CoA. Its function is as follows. Catalyzes the cleavage of citrate into oxaloacetate and acetyl-CoA, the latter serving as common substrate in multiple biochemical reactions in protein, carbohydrate and lipid metabolism. This Caenorhabditis elegans protein is Probable ATP-citrate synthase.